The following is a 1271-amino-acid chain: Chitin synthase 4 (1271 aa).

Disordered stretches follow at residues M1–H45 and P58–S117. Residues A21–A30 show a composition bias toward polar residues. The next 2 membrane-spanning stretches (helical) occupy residues W165–L185 and L201–F221. N407 is a glycosylation site (N-linked (GlcNAc...) asparagine). The helical transmembrane segment at L473–L493 threads the bilayer. N-linked (GlcNAc...) asparagine glycans are attached at residues N713 and N836. Transmembrane regions (helical) follow at residues L867 to V887, I894 to I914, and F919 to L939. The segment at H999 to P1081 is disordered. The span at R1027–E1037 shows a compositional bias: polar residues. N-linked (GlcNAc...) asparagine glycosylation is found at N1055 and N1161. Residues E1213 to S1269 form the DEK-C domain.

This sequence belongs to the chitin synthase family.

Its subcellular location is the cell membrane. The enzyme catalyses [(1-&gt;4)-N-acetyl-beta-D-glucosaminyl](n) + UDP-N-acetyl-alpha-D-glucosamine = [(1-&gt;4)-N-acetyl-beta-D-glucosaminyl](n+1) + UDP + H(+). Functionally, polymerizes chitin, a structural polymer of the cell wall and septum, by transferring the sugar moiety of UDP-GlcNAc to the non-reducing end of the growing chitin polymer. Produces a large proportion of the chitin that is not deacetylated to chitosan. This is Chitin synthase 4 from Cryptococcus neoformans var. grubii serotype A (strain H99 / ATCC 208821 / CBS 10515 / FGSC 9487) (Filobasidiella neoformans var. grubii).